The sequence spans 172 residues: Translationally-controlled tumor protein homolog (172 aa).

The TCTP domain maps to 1–172 (MIIYKDTVTE…FKDGLISEKC (172 aa)).

The protein belongs to the TCTP family.

Its subcellular location is the cytoplasm. Functionally, involved in calcium binding and microtubule stabilization. The protein is Translationally-controlled tumor protein homolog (tpt1) of Xenopus tropicalis (Western clawed frog).